The following is a 154-amino-acid chain: Low molecular weight protein-tyrosine-phosphatase PtpA (154 aa).

The active-site Nucleophile is Cys-8. The active site involves Arg-14. Asp-120 acts as the Proton donor in catalysis.

Belongs to the low molecular weight phosphotyrosine protein phosphatase family.

The enzyme catalyses O-phospho-L-tyrosyl-[protein] + H2O = L-tyrosyl-[protein] + phosphate. In terms of biological role, dephosphorylates the phosphotyrosine-containing proteins. The chain is Low molecular weight protein-tyrosine-phosphatase PtpA (ptpA) from Staphylococcus epidermidis (strain ATCC 35984 / DSM 28319 / BCRC 17069 / CCUG 31568 / BM 3577 / RP62A).